The sequence spans 197 residues: Fe/S biogenesis protein NfuA (197 aa).

Residues Cys155 and Cys158 each coordinate [4Fe-4S] cluster.

The protein belongs to the NfuA family. As to quaternary structure, homodimer. [4Fe-4S] cluster serves as cofactor.

Its function is as follows. Involved in iron-sulfur cluster biogenesis. Binds a 4Fe-4S cluster, can transfer this cluster to apoproteins, and thereby intervenes in the maturation of Fe/S proteins. Could also act as a scaffold/chaperone for damaged Fe/S proteins. The sequence is that of Fe/S biogenesis protein NfuA from Pseudomonas syringae pv. syringae (strain B728a).